The chain runs to 1313 residues: Histone-lysine N-methyltransferase, H3 lysine-4 specific (1313 aa).

6 disordered regions span residues 1–205 (MSRS…DPSR), 400–458 (KKSR…KPRH), 555–607 (GKSS…AKNL), 667–792 (IVFD…AGED), 842–908 (ELPS…SKKQ), and 932–982 (AGIE…DPEL). The span at 7–18 (ASFAQFFPAAPR) shows a compositional bias: low complexity. Over residues 19–31 (AARDRATERERAR) the composition is skewed to basic and acidic residues. Residues 70–80 (HITSLNHSSSA) show a composition bias toward polar residues. Residues 105–121 (SASSHTSTSSSIFSSST) are compositionally biased toward low complexity. 2 stretches are compositionally biased toward polar residues: residues 130–158 (SVRN…STSL) and 174–186 (NGLT…SATD). The segment covering 194 to 204 (GTERVPPRDPS) has biased composition (basic and acidic residues). Residues 559–607 (RSSEDHRRHSYGSEKRPPPEHRQRDDQDRRRRDEEADIEEEKKQRAKNL) show a composition bias toward basic and acidic residues. Residues 702 to 716 (RVRKLKSRGVNARKH) show a composition bias toward basic residues. Over residues 758-784 (MIRDTEEPESRPRSRVSSEEDRNKEET) the composition is skewed to basic and acidic residues. Residues 843-855 (LPSQEQAVESVTP) are compositionally biased toward polar residues. Basic and acidic residues predominate over residues 868 to 884 (ADVKAEPAEDKETEDSR). The segment covering 895-907 (PKKKAKAKKKSKK) has biased composition (basic residues). The span at 960 to 978 (LETKGEALEAPETESKPDL) shows a compositional bias: basic and acidic residues. The RxxxRR motif signature appears at 1137-1142 (RVNNRR). The region spanning 1171–1288 (KPVKFARSAI…QNEELTYDYK (118 aa)) is the SET domain. Tyr-1287 is an S-adenosyl-L-methionine binding site. In terms of domain architecture, Post-SET spans 1297–1313 (DRIPCLCGTAACKGFLN).

It belongs to the class V-like SAM-binding methyltransferase superfamily. Component of the Set1C/COMPASS complex.

The protein resides in the nucleus. It localises to the chromosome. It carries out the reaction L-lysyl(4)-[histone H3] + 3 S-adenosyl-L-methionine = N(6),N(6),N(6)-trimethyl-L-lysyl(4)-[histone H3] + 3 S-adenosyl-L-homocysteine + 3 H(+). The catalysed reaction is N(6)-methyl-L-lysyl(4)-[histone H3] + S-adenosyl-L-methionine = N(6),N(6)-dimethyl-L-lysyl(4)-[histone H3] + S-adenosyl-L-homocysteine + H(+). The enzyme catalyses N(6),N(6)-dimethyl-L-lysyl(4)-[histone H3] + S-adenosyl-L-methionine = N(6),N(6),N(6)-trimethyl-L-lysyl(4)-[histone H3] + S-adenosyl-L-homocysteine + H(+). Its function is as follows. Catalytic component of the COMPASS (Set1C) complex that specifically mono-, di- and trimethylates histone H3 to form H3K4me1/2/3. Binds RNAs which might negatively affect its histone methyltransferase activity. COMPASS recognizes ubiquitinated H2B on one face of the nucleosome which stimulates the methylation of H3 on the opposing face. This Neurospora crassa (strain ATCC 24698 / 74-OR23-1A / CBS 708.71 / DSM 1257 / FGSC 987) protein is Histone-lysine N-methyltransferase, H3 lysine-4 specific (set-1).